The following is a 108-amino-acid chain: Protein S100-A15A (108 aa).

The EF-hand domain maps to 53–88 (KEPYYVTELFQATDKNRDNQICFDEFLYILGKLVKD). Residues D66, N68, D70, Q72, and E77 each coordinate Ca(2+).

This sequence belongs to the S-100 family.

This is Protein S100-A15A (S100A15A) from Gorilla gorilla gorilla (Western lowland gorilla).